A 314-amino-acid chain; its full sequence is DNA-directed RNA polymerase subunit alpha (314 aa).

The interval 1–228 (MIEIEKPRIE…EHLNIFVDLT (228 aa)) is alpha N-terminal domain (alpha-NTD). An alpha C-terminal domain (alpha-CTD) region spans residues 245–314 (KEKVLEMSIE…DLGLGLRKED (70 aa)).

The protein belongs to the RNA polymerase alpha chain family. In terms of assembly, homodimer. The RNAP catalytic core consists of 2 alpha, 1 beta, 1 beta' and 1 omega subunit. When a sigma factor is associated with the core the holoenzyme is formed, which can initiate transcription.

It catalyses the reaction RNA(n) + a ribonucleoside 5'-triphosphate = RNA(n+1) + diphosphate. Its function is as follows. DNA-dependent RNA polymerase catalyzes the transcription of DNA into RNA using the four ribonucleoside triphosphates as substrates. This Macrococcus caseolyticus (strain JCSC5402) (Macrococcoides caseolyticum) protein is DNA-directed RNA polymerase subunit alpha.